The following is a 344-amino-acid chain: MPNCFKFHTVIERHWQKPYPVLSFLLKPLSGLFAKIAAKRRTDFLSGKRQSEKLPVPVVVVGNIHAGGTGKTPIVAALVSGLQEKGVKVGIISRGYGRKSKAVHVLNAESRAEDAGDEPLLLFRKTGAPTAVGSSRAEAGRALLAAHPDIGLIVADDGLQHYALRRDVEIAVFPAADTGRTDLDLLPNGNLREPLLRLDSVDAVVVSGGKADALFRPSENMFHSRIEAGRIYRLNNPSEILDTGRLKNQTVVAVAGIAKPARFFDSLRNMGITVKRTVALPDHADISAADLPDADAVIITEKDAVKFSDGICTDNVWVLPVCAIIEPDLAAFVLERLEDVPKAV.

65-72 (HAGGTGKT) is a binding site for ATP.

It belongs to the LpxK family.

It carries out the reaction a lipid A disaccharide + ATP = a lipid IVA + ADP + H(+). It functions in the pathway glycolipid biosynthesis; lipid IV(A) biosynthesis; lipid IV(A) from (3R)-3-hydroxytetradecanoyl-[acyl-carrier-protein] and UDP-N-acetyl-alpha-D-glucosamine: step 6/6. Transfers the gamma-phosphate of ATP to the 4'-position of a tetraacyldisaccharide 1-phosphate intermediate (termed DS-1-P) to form tetraacyldisaccharide 1,4'-bis-phosphate (lipid IVA). This is Tetraacyldisaccharide 4'-kinase from Neisseria meningitidis serogroup A / serotype 4A (strain DSM 15465 / Z2491).